Consider the following 213-residue polypeptide: RNA chaperone ProQ (213 aa).

A disordered region spans residues 105–150; sequence ESQEKAKAKRAAQTPKAAPAGKAPAKKAPKKVAVPARKTERPAKAA. Low complexity predominate over residues 115–127; it reads AAQTPKAAPAGKA.

This sequence belongs to the ProQ family.

Its subcellular location is the cytoplasm. RNA chaperone with significant RNA binding, RNA strand exchange and RNA duplexing activities. This chain is RNA chaperone ProQ, found in Shewanella oneidensis (strain ATCC 700550 / JCM 31522 / CIP 106686 / LMG 19005 / NCIMB 14063 / MR-1).